Consider the following 74-residue polypeptide: Lambda-hexatoxin-Hv1d (74 aa).

The N-terminal stretch at 1 to 22 (MNTATCFIVLLVVATVIGGIEA) is a signal peptide. Positions 23–35 (GESDMRKDVMGLF) are excised as a propeptide. Disulfide bonds link Cys-40–Cys-54, Cys-47–Cys-59, Cys-50–Cys-51, and Cys-53–Cys-69.

Belongs to the neurotoxin 11 (kappa toxin) family. As to expression, expressed by the venom gland.

It is found in the secreted. In terms of biological role, this excitatory toxin inhibits insect calcium-activated potassium (KCa) channels (Slo-type). This chain is Lambda-hexatoxin-Hv1d, found in Hadronyche versuta (Blue mountains funnel-web spider).